Consider the following 137-residue polypeptide: ATP synthase epsilon chain (137 aa).

It belongs to the ATPase epsilon chain family. F-type ATPases have 2 components, CF(1) - the catalytic core - and CF(0) - the membrane proton channel. CF(1) has five subunits: alpha(3), beta(3), gamma(1), delta(1), epsilon(1). CF(0) has three main subunits: a, b and c.

It localises to the cell membrane. Functionally, produces ATP from ADP in the presence of a proton gradient across the membrane. This is ATP synthase epsilon chain from Mycoplasmopsis synoviae (strain 53) (Mycoplasma synoviae).